We begin with the raw amino-acid sequence, 153 residues long: Transcriptional repressor NrdR 3 (153 aa).

The segment at 1 to 26 (MRCPFCGHDDTQVKDSRPTEDNSAIR) is disordered. The segment at 3-34 (CPFCGHDDTQVKDSRPTEDNSAIRRRRSCPEC) is a zinc-finger region. Over residues 7-24 (GHDDTQVKDSRPTEDNSA) the composition is skewed to basic and acidic residues. The ATP-cone domain occupies 49–139 (LVVIKKDGGR…VYRNFREAKD (91 aa)).

This sequence belongs to the NrdR family. Requires Zn(2+) as cofactor.

Functionally, negatively regulates transcription of bacterial ribonucleotide reductase nrd genes and operons by binding to NrdR-boxes. The polypeptide is Transcriptional repressor NrdR 3 (Paramagnetospirillum magneticum (strain ATCC 700264 / AMB-1) (Magnetospirillum magneticum)).